A 467-amino-acid polypeptide reads, in one-letter code: Glutamate--tRNA ligase (467 aa).

The 'HIGH' region signature appears at P9–G19. A 'KMSKS' region motif is present at residues K237–R241. K240 lines the ATP pocket.

Belongs to the class-I aminoacyl-tRNA synthetase family. Glutamate--tRNA ligase type 1 subfamily. As to quaternary structure, monomer.

The protein resides in the cytoplasm. It catalyses the reaction tRNA(Glu) + L-glutamate + ATP = L-glutamyl-tRNA(Glu) + AMP + diphosphate. Functionally, catalyzes the attachment of glutamate to tRNA(Glu) in a two-step reaction: glutamate is first activated by ATP to form Glu-AMP and then transferred to the acceptor end of tRNA(Glu). This chain is Glutamate--tRNA ligase, found in Xanthomonas axonopodis pv. citri (strain 306).